Consider the following 103-residue polypeptide: Small ribosomal subunit protein uS10 (103 aa).

The protein belongs to the universal ribosomal protein uS10 family. In terms of assembly, part of the 30S ribosomal subunit.

Involved in the binding of tRNA to the ribosomes. In Baumannia cicadellinicola subsp. Homalodisca coagulata, this protein is Small ribosomal subunit protein uS10.